The sequence spans 54 residues: MRELDEMISRLRNRGIKVEKVKYPKQTLSEKKWVHQCKQPLKTNYRDFNGYSFT.

As to quaternary structure, interacts with SpxH.

Its function is as follows. Inhibitor of Spx proteolytic control. Acts by interacting with SpxH/YjbH, which disrupts interaction between SpxH and Spx, and inhibits SpxH-enhanced proteolysis of Spx by ClpXP. Required for the stabilization of Spx and activation of Spx-regulated genes in response to cell wall stress. This Bacillus subtilis (strain 168) protein is Anti-adapter protein SpxO.